Consider the following 876-residue polypeptide: Alanine--tRNA ligase (876 aa).

His-564, His-568, Cys-666, and His-670 together coordinate Zn(2+).

It belongs to the class-II aminoacyl-tRNA synthetase family. Requires Zn(2+) as cofactor.

The protein resides in the cytoplasm. The enzyme catalyses tRNA(Ala) + L-alanine + ATP = L-alanyl-tRNA(Ala) + AMP + diphosphate. Functionally, catalyzes the attachment of alanine to tRNA(Ala) in a two-step reaction: alanine is first activated by ATP to form Ala-AMP and then transferred to the acceptor end of tRNA(Ala). Also edits incorrectly charged Ser-tRNA(Ala) and Gly-tRNA(Ala) via its editing domain. The chain is Alanine--tRNA ligase from Porphyromonas gingivalis (strain ATCC BAA-308 / W83).